The chain runs to 539 residues: Serine/threonine-protein kinase BUR1 (539 aa).

Residues 1–15 show a composition bias toward polar residues; the sequence is MEKLSETTPNGTSPR. The segment at 1-27 is disordered; the sequence is MEKLSETTPNGTSPRTFALNHSRPRSS. The 303-residue stretch at 37–339 folds into the Protein kinase domain; that stretch reads YELLGKLGEG…AVDALQHPWF (303 aa). ATP contacts are provided by residues 43-51 and lysine 66; that span reads LGEGTFGEV. Catalysis depends on aspartate 169, which acts as the Proton acceptor. A disordered region spans residues 370–539; the sequence is AALPPAPKGG…DRPDHNGYRR (170 aa). Basic and acidic residues-rich tracts occupy residues 414 to 428, 471 to 514, and 521 to 539; these read NGPD…RERG, NRDD…DRGT, and PRHD…GYRR.

The protein belongs to the protein kinase superfamily. CMGC Ser/Thr protein kinase family. CDC2/CDKX subfamily.

It localises to the nucleus. It carries out the reaction L-seryl-[protein] + ATP = O-phospho-L-seryl-[protein] + ADP + H(+). The catalysed reaction is L-threonyl-[protein] + ATP = O-phospho-L-threonyl-[protein] + ADP + H(+). The enzyme catalyses [DNA-directed RNA polymerase] + ATP = phospho-[DNA-directed RNA polymerase] + ADP + H(+). In terms of biological role, serine/threonine-protein kinase involved in transcription regulation. Phosphorylates the UBC2/RAD6 ubiquitin-conjugating enzyme (E2), leading to monoubiquitination of histone H2B and the silencing of telomeric-associated genes. Also required for histone H3 methylation. Necessary for the recovery from pheromone-induced growth arrest in the cell cycle G1 phase. The polypeptide is Serine/threonine-protein kinase BUR1 (BUR1) (Gibberella zeae (strain ATCC MYA-4620 / CBS 123657 / FGSC 9075 / NRRL 31084 / PH-1) (Wheat head blight fungus)).